A 104-amino-acid polypeptide reads, in one-letter code: Large ribosomal subunit protein uL24 (104 aa).

It belongs to the universal ribosomal protein uL24 family. In terms of assembly, part of the 50S ribosomal subunit.

Its function is as follows. One of two assembly initiator proteins, it binds directly to the 5'-end of the 23S rRNA, where it nucleates assembly of the 50S subunit. Functionally, one of the proteins that surrounds the polypeptide exit tunnel on the outside of the subunit. The chain is Large ribosomal subunit protein uL24 from Shewanella piezotolerans (strain WP3 / JCM 13877).